The primary structure comprises 521 residues: MLQRSLGVNGRKLAMSARSAKRERKNASTAASKCYVVPPSARGWVHAYSVTATSMLNRRKAILDYLQGAVWVLPTFGVAIGLGSGAVLSMIPVKSGTLIDKLMFQGTPGDARGVLIVVSATMITTIGIVFSLTVLSLQIASSQFSVRLLRTFLRDVPNQVVLAIFACTFAYSTGGLHTVGEHRDGGAFIPKVAVTGSLALAFVSIAALIYFLHHLMHSIQIDTIMDKVRLRTLGLVDQLYPESDTADRQVETPPSPPADAVPLLAPHSGYLQTVDVDDIAELAAASRYTALLVTFVGDYVTAGGLLGWCWRRGTAPGAPGSDFPQRCLRHVHIGFERTLQQDIRFGLRQMVDIALRALSPALNDPYTAIQVVHHLSAVESVLASRALPDDVRRDRAGELLFWLPYPSFATYLHVGCAQIRRYGSREPLVLTALLQLLSAVAQNCVDPSRRVAVQTQIALVVRAAQREFADESDRAMVLGAAARATEVVERPGTLAPPPSTFGQVAAAQAAASTIRSADRDG.

Positions 1-25 (MLQRSLGVNGRKLAMSARSAKRERK) are disordered. Transmembrane regions (helical) follow at residues 68–88 (GAVW…GAVL), 114–134 (VLIV…SLTV), 160–180 (VVLA…HTVG), 192–212 (VAVT…IYFL), 290–310 (ALLV…GWCW), and 399–419 (LLFW…CAQI).

The protein resides in the cell membrane. This is an uncharacterized protein from Mycobacterium bovis (strain ATCC BAA-935 / AF2122/97).